The following is a 247-amino-acid chain: Putative methyltransferase GWCH70_2453 (247 aa).

Belongs to the methyltransferase superfamily.

In terms of biological role, may be a S-adenosyl-L-methionine (SAM)-dependent methyltransferase. The sequence is that of Putative methyltransferase GWCH70_2453 from Geobacillus sp. (strain WCH70).